A 495-amino-acid polypeptide reads, in one-letter code: Internal alternative NAD(P)H-ubiquinone oxidoreductase A1, mitochondrial (495 aa).

The N-terminal 41 residues, 1-41 (MPWFKNLIKISKTITNQSSSYKSITPLASPLLAQFLQFTKQ), are a transit peptide targeting the mitochondrion. 61–91 (RIVVLGSGWAGCRLMKDIDTNIYDVVCVSPR) contacts FAD. 228–264 (LHCVVVGGGPTGVEFSGELSDFILKDVHQRYAHVKDY) contributes to the NAD(+) binding site. The short motif at 486–495 (LVFGRDISRI) is the Microbody targeting signal element.

This sequence belongs to the NADH dehydrogenase family. The cofactor is FAD.

It is found in the mitochondrion inner membrane. The protein localises to the peroxisome. The catalysed reaction is a quinone + NADH + H(+) = a quinol + NAD(+). It carries out the reaction a ubiquinone + NADH + H(+) = a ubiquinol + NAD(+). Functionally, alternative NADH-ubiquinone oxidoreductase which catalyzes the oxidation of mitochondrial NADH does not translocate protons across the inner mitochondrial membrane. This Solanum tuberosum (Potato) protein is Internal alternative NAD(P)H-ubiquinone oxidoreductase A1, mitochondrial (NDA1).